The sequence spans 505 residues: Deoxyguanosinetriphosphate triphosphohydrolase (505 aa).

The 208-residue stretch at 66-273 folds into the HD domain; the sequence is RLTHSLEVQQ…MEAADDISYC (208 aa).

This sequence belongs to the dGTPase family. Type 1 subfamily. As to quaternary structure, homotetramer. Mg(2+) is required as a cofactor.

The enzyme catalyses dGTP + H2O = 2'-deoxyguanosine + triphosphate + H(+). Its function is as follows. dGTPase preferentially hydrolyzes dGTP over the other canonical NTPs. In Escherichia fergusonii (strain ATCC 35469 / DSM 13698 / CCUG 18766 / IAM 14443 / JCM 21226 / LMG 7866 / NBRC 102419 / NCTC 12128 / CDC 0568-73), this protein is Deoxyguanosinetriphosphate triphosphohydrolase.